The primary structure comprises 262 residues: Troponin T, slow skeletal muscle (262 aa).

Acidic residues predominate over residues 1–31; the sequence is MSDTEEQEYEEEQAEDEEAVEEEEAPEEPEP. 2 disordered regions span residues 1–62 and 109–153; these read MSDT…ERVD and ERAE…KKKV. Ser-2 is modified (phosphoserine; by CK2). The span at 32 to 41 shows a compositional bias: basic and acidic residues; the sequence is VAEREEERPK. Residues 43 to 55 show a composition bias toward pro residues; sequence SRPVVPPLIPPKI. The span at 109–149 shows a compositional bias: basic and acidic residues; sequence ERAEQQRFRTEKERERQAKLAEEKMRKEEEEAKKRAEDDAK.

This sequence belongs to the troponin T family. As to quaternary structure, interacts with TPM3. As to expression, expressed in adult soleus muscle.

In terms of biological role, troponin T is the tropomyosin-binding subunit of troponin, the thin filament regulatory complex which confers calcium-sensitivity to striated muscle actomyosin ATPase activity. This chain is Troponin T, slow skeletal muscle (Tnnt1), found in Mus musculus (Mouse).